Reading from the N-terminus, the 257-residue chain is Hydroxyacylglutathione hydrolase (257 aa).

The Zn(2+) site is built by histidine 53, histidine 55, aspartate 57, histidine 58, histidine 109, aspartate 126, and histidine 164.

The protein belongs to the metallo-beta-lactamase superfamily. Glyoxalase II family. In terms of assembly, monomer. Requires Zn(2+) as cofactor.

The catalysed reaction is an S-(2-hydroxyacyl)glutathione + H2O = a 2-hydroxy carboxylate + glutathione + H(+). It participates in secondary metabolite metabolism; methylglyoxal degradation; (R)-lactate from methylglyoxal: step 2/2. Thiolesterase that catalyzes the hydrolysis of S-D-lactoyl-glutathione to form glutathione and D-lactic acid. The polypeptide is Hydroxyacylglutathione hydrolase (Baumannia cicadellinicola subsp. Homalodisca coagulata).